The primary structure comprises 109 residues: MRNPLLQPWLTEKSTRLTEQQGQYAFMVKAAADKTDIKRAIEEKFGVEVRSVRTANCLGKSKRQYTRKGLIAGKKNDWKKAVITLKQGQEINYYSGSTDQGEEKKSKKG.

Belongs to the universal ribosomal protein uL23 family. As to quaternary structure, part of the 50S ribosomal subunit. Contacts protein L29, and trigger factor when it is bound to the ribosome.

In terms of biological role, one of the early assembly proteins it binds 23S rRNA. One of the proteins that surrounds the polypeptide exit tunnel on the outside of the ribosome. Forms the main docking site for trigger factor binding to the ribosome. This Chlorobium phaeobacteroides (strain BS1) protein is Large ribosomal subunit protein uL23.